The primary structure comprises 100 residues: Transcription elongation factor A protein-like 7 (100 aa).

Positions 1–32 are enriched in basic and acidic residues; that stretch reads MQKPCKENEGKPKCSVPKREEKRPYGEFERQQ. Residues 1 to 34 form a disordered region; sequence MQKPCKENEGKPKCSVPKREEKRPYGEFERQQTE. Residues 60 to 88 are a coiled coil; it reads EEMTREGDEMERCLEEIRGLRKKFRALHS.

This sequence belongs to the TFS-II family. TFA subfamily. In terms of tissue distribution, highly expressed in normal and fetal brain tissues, and weakly expressed in uterus and ovary. Down-regulated in epithelial ovarian, cervical, prostate, breast, brain and lung cancer cell lines and in brain and ovarian tumors.

It is found in the nucleus. Functionally, plays a role in the negative regulation of NF-kappa-B signaling at the basal level by modulating transcriptional activity of NF-kappa-B on its target gene promoters. Associates with cyclin D1 promoter containing Myc E-box sequence and transcriptionally represses cyclin D1 expression. Regulates telomerase reverse transcriptase expression and telomerase activity in both ALT (alternative lengthening of telomeres)and telomerase-positive cell lines. The sequence is that of Transcription elongation factor A protein-like 7 (TCEAL7) from Homo sapiens (Human).